We begin with the raw amino-acid sequence, 2670 residues long: Inositol 1,4,5-trisphosphate-gated calcium channel ITPR3 (2670 aa).

Residues 1 to 2201 (MNEMSSFLHI…LIYWFSRRMT (2201 aa)) lie on the Cytoplasmic side of the membrane. MIR domains are found at residues 113 to 173 (GDVV…LRSN), 174 to 224 (GDNV…INLF), 232 to 288 (EEVL…VEVV), 295 to 372 (GGAG…LDPT), and 378 to 434 (DSFV…IVSV). Positions 266, 268, 269, and 270 each coordinate 1D-myo-inositol 1,4,5-trisphosphate. Positions 321–344 (PSYKGDVSDPKAAGPGAQSRTGRR) are disordered. The 1D-myo-inositol 1,4,5-trisphosphate site is built by Arg503, Lys507, Arg510, Tyr567, Arg568, and Lys569. Arg743 is a binding site for Ca(2+). Phosphoserine is present on residues Ser916 and Ser934. 2 residues coordinate Ca(2+): Glu1122 and Glu1125. Residues 1134 to 1153 (VKGEEGEAGASKDKKERPSD) are compositionally biased toward basic and acidic residues. 2 disordered regions span residues 1134–1164 (VKGEEGEAGASKDKKERPSDEEGFLQPHGEK) and 1807–1849 (NMSD…GLHR). 3 positions are modified to phosphoserine: Ser1813, Ser1832, and Ser1834. The segment covering 1831-1842 (SSFSMPSSSRYS) has biased composition (low complexity). Residues Glu1881 and Glu1945 each coordinate Ca(2+). Residues Ala1995, Glu2148, and Lys2151 each contribute to the ATP site. Residues 2202 to 2222 (LWGSISFNLAVFINIIIAFFY) form a helical membrane-spanning segment. Over 2223-2233 (PYVEGASTGVL) the chain is Extracellular. Residues 2234 to 2254 (GSPLISLLFWILICFSIAALF) traverse the membrane as a helical segment. Residues 2255–2263 (TKHYSVRPL) lie on the Cytoplasmic side of the membrane. Residues 2264–2284 (IVALVLRSIYYLGIGPTLNIL) traverse the membrane as a helical segment. Residues 2285 to 2324 (GALNLTNKIVFVVSFVGNRGTFIRGYKAMVMDMEFLYHVG) are Extracellular-facing. The helical transmembrane segment at 2325–2345 (YILTSVLGLFAHELFYSILLF) threads the bilayer. Topologically, residues 2346–2367 (DLIYREETLFNVIKSVTRNGRS) are cytoplasmic. The helical transmembrane segment at 2368–2388 (ILLTALLALILVYLFSIVGFL) threads the bilayer. Residues 2389-2495 (FLKDDFILEV…ESLFPARVVY (107 aa)) lie on the Extracellular side of the membrane. Cysteines 2454 and 2460 form a disulfide. The chain crosses the membrane as a helical span at residues 2496-2516 (DLLFFFIVIIIVLNLIFGVII). Over 2517 to 2670 (DTFADLRSEK…FVDVQNCMSR (154 aa)) the chain is Cytoplasmic. ATP is bound by residues Cys2537 and Phe2538. Cys2537 serves as a coordination point for Zn(2+). Cys2540 and His2557 together coordinate Zn(2+). 4 residues coordinate ATP: Lys2559, His2562, Asn2563, and Met2564. His2562 provides a ligand contact to Zn(2+). Thr2580 is a Ca(2+) binding site. Ser2608 and Ser2669 each carry phosphoserine.

This sequence belongs to the InsP3 receptor family. In terms of assembly, homotetramer. Homodimer. Interacts with TRPC1 and TRPC3. Interacts with TRPC4. Interacts with TRPV4. Interacts with SIGMAR1. Interacts with AKT1 and PML. Interacts with IRAG2 (via coiled-coil domain). Interacts with CABP1. Interacts with TMBIM4/LFG4. Interacts with CEMIP. Interacts with TESPA1. Interacts with TMEM203. Interacts with BOK; regulates ITPR3 expression. Interacts with BCL2L10. Interacts with CHGA and CHGB. In terms of processing, phosphorylated by AKT1 on serine and/or threonine residues.

It is found in the endoplasmic reticulum membrane. Its subcellular location is the cytoplasmic vesicle. It localises to the secretory vesicle membrane. The catalysed reaction is Ca(2+)(in) = Ca(2+)(out). Inositol 1,4,5-trisphosphate-gated calcium channel is regulated by cytosolic calcium in a biphasic manner. At low concentrations, cytosolic calcium binds at a high-affinity juxtamembrane domain (JD) calcium binding site, allowing ITPR3 to activate by escaping a low-energy resting state through an ensemble of preactivated states. At high cytosolic calcium concentrations, ITPR3 preferentially enters an inhibited state stabilized by calcium binding at a second, low-affinity cytoplasmic domain (CD) calcium binding site. Its function is as follows. Inositol 1,4,5-trisphosphate-gated calcium channel that, upon 1D-myo-inositol 1,4,5-trisphosphate binding, transports calcium from the endoplasmic reticulum lumen to cytoplasm, thus releasing the intracellular calcium and therefore participates in cellular calcium ion homeostasis. 11D-myo-inositol 1,4,5-trisphosphate binds to the ligand-free channel without altering its global conformation, yielding the low-energy resting state, then progresses through resting-to preactivated transitions to the higher energy preactivated state, which increases affinity for calcium, promoting binding of the low basal cytosolic calcium at the juxtamembrane domain (JD) site, favoring the transition through the ensemble of high-energy intermediate states along the trajectory to the fully-open activated state. Upon opening, releases calcium in the cytosol where it can bind to the low-affinity cytoplasmic domain (CD) site and stabilizes the inhibited state to terminate calcium release. This Rattus norvegicus (Rat) protein is Inositol 1,4,5-trisphosphate-gated calcium channel ITPR3.